The chain runs to 618 residues: MAISIHPPRDPNTLSNYNNWICTHITANFDILFDQKKLVGNVIHKLKSTTNGESQEIILDSNHVAIGDVKIDGRPSEWELLPPLEPYGSALKIKLDQGVNLNETIDVEISVQTTEKCTALQWLTPAQTSNKKHPYMFSQCQAIHARSIFPCQDTPDVKSTIDFNISSPLPVIASGLPVRDALGASKSEGKSLYQFHQRVPIPSYLFALASGDISEAAIGPRSVVATSPDKVQECQWELEADTEKFIGAIEKIVYPYAWGEYNVLILPPSFPYGGMENPIFTFATPSIISKDRENIDVIAHELAHSWSGNLVTNASWEHFWLNEGWTTYLERRILAAVHGEAYRHFSAIIGWKALTDSVEHFGHDHEFTKLITDLKGKDPDDAFSSIPYEKGFNFLFHLETLVGKQKFDRFIPHYFTVFKGKSLDSYEFKATLLDFFGTDAEASKLLNDLDWDTWFYAPGLPPKPQFDTSLVDVVYELAQKWKSLSETSSFKPQLSDIESLSANQIVVFLEQMLLLERPLTPELSKLMGEVYGLSKSENIEVANLYFQLGLKAGDENVVDPATELLGRIGRMKFVRPLFRSLQRVNREVAVATFEKYKDFYHPICRAMVEKDLFGKRDV.

A peptide is bound by residues 139–141 (QCQ) and 271–276 (PYGGME). His-300 is a Zn(2+) binding site. Glu-301 functions as the Proton acceptor in the catalytic mechanism. Zn(2+)-binding residues include His-304 and Glu-323. Tyr-388 serves as the catalytic Proton donor.

This sequence belongs to the peptidase M1 family. The cofactor is Zn(2+).

The protein resides in the cytoplasm. It is found in the nucleus. The catalysed reaction is an epoxide + H2O = an ethanediol. In terms of biological role, aminopeptidase that preferentially cleaves di- and tripeptides. Also has low epoxide hydrolase activity (in vitro). Can hydrolyze the epoxide leukotriene LTA(4) but it forms preferentially 5,6-dihydroxy-7,9,11,14-eicosatetraenoic acid rather than the cytokine leukotriene B(4) as the product compared to the homologous mammalian enzyme (in vitro). This is Leucine aminopeptidase 2 from Aspergillus niger (strain ATCC MYA-4892 / CBS 513.88 / FGSC A1513).